We begin with the raw amino-acid sequence, 103 residues long: Protein translation factor SUI1 homolog (103 aa).

This sequence belongs to the SUI1 family.

The protein is Protein translation factor SUI1 homolog of Hyperthermus butylicus (strain DSM 5456 / JCM 9403 / PLM1-5).